The sequence spans 257 residues: MVLIRVLANLLILQLSYAQKSSELIIGGDECNINEHPFLVLVYYDDYQCGGTLINEEWVLTAAHCNGENMEIYLGMHSKKVPNKDRRRRVPKEKFFCDSSKNYTKWNKDIMLIRLNRPVRKSAHIAPLSLPSSPPSVGSVCRIMGWGTISPTKVTLPDVPRCANINLLDYEVCRAAYAGLPATSRTLCAGILEGGKDSCGGDSGGPLICNGQFQGIVSWGGDPCAQPHEPGLYTNVFDHLDWIKGIIAGNTDATCPP.

An N-terminal signal peptide occupies residues 1–18 (MVLIRVLANLLILQLSYA). Residues 19-24 (QKSSEL) constitute a propeptide that is removed on maturation. The Peptidase S1 domain maps to 25–248 (IIGGDECNIN…HLDWIKGIIA (224 aa)). 6 disulfides stabilise this stretch: Cys31–Cys162, Cys49–Cys65, Cys97–Cys255, Cys141–Cys209, Cys173–Cys188, and Cys199–Cys224. His64 serves as the catalytic Charge relay system. An N-linked (GlcNAc...) asparagine glycan is attached at Asn102. Catalysis depends on Asp109, which acts as the Charge relay system. The active-site Charge relay system is Ser203.

This sequence belongs to the peptidase S1 family. Snake venom subfamily. In terms of assembly, monomer. In terms of tissue distribution, expressed by the venom gland.

The protein localises to the secreted. Snake venom serine protease with strong beta-fibrinogenolytic activities, angiotensin I (AGT)-degrading activities and strong kallikrein-like activities in vitro, releasing bradykinin from kininogen (KNG1). Intravenous injection mildly lowers blood pressure in experimental rats, which may be explained by the action on angiotensin I and kininogen. Exhibits amidase activity against N-benzoyl-Pro-Phe-Arg-p-nitroanilide in vitro. The polypeptide is Beta-fibrinogenase mucrofibrase-5 (Protobothrops mucrosquamatus (Taiwan habu)).